Reading from the N-terminus, the 226-residue chain is ATP synthase subunit a (226 aa).

The next 5 helical transmembrane spans lie at 18-38, 74-94, 100-120, 158-180, and 197-217; these read LSLN…SYWL, FISL…PYIF, LTLT…YGWI, LAVR…GNTG, and IALL…FAVL.

It belongs to the ATPase A chain family. F-type ATPases have 2 components, CF(1) - the catalytic core - and CF(0) - the membrane proton channel. CF(1) has five subunits: alpha(3), beta(3), gamma(1), delta(1), epsilon(1). CF(0) has three main subunits: a, b and c.

The protein resides in the mitochondrion inner membrane. In terms of biological role, mitochondrial membrane ATP synthase (F(1)F(0) ATP synthase or Complex V) produces ATP from ADP in the presence of a proton gradient across the membrane which is generated by electron transport complexes of the respiratory chain. F-type ATPases consist of two structural domains, F(1) - containing the extramembraneous catalytic core and F(0) - containing the membrane proton channel, linked together by a central stalk and a peripheral stalk. During catalysis, ATP synthesis in the catalytic domain of F(1) is coupled via a rotary mechanism of the central stalk subunits to proton translocation. Key component of the proton channel; it may play a direct role in the translocation of protons across the membrane. The sequence is that of ATP synthase subunit a (mt:ATPase6) from Anopheles gambiae (African malaria mosquito).